We begin with the raw amino-acid sequence, 323 residues long: HPr kinase/phosphorylase (323 aa).

Catalysis depends on residues H142 and K163. An ATP-binding site is contributed by 157–164; sequence GESGVGKS. S164 contacts Mg(2+). The active-site Proton acceptor; for phosphorylation activity. Proton donor; for dephosphorylation activity is the D181. The segment at 205–214 is important for the catalytic mechanism of both phosphorylation and dephosphorylation; it reads LEVRGLGMLN. E206 is a binding site for Mg(2+). The active site involves R249. An important for the catalytic mechanism of dephosphorylation region spans residues 270-275; that stretch reads PVAAGR.

Belongs to the HPrK/P family. In terms of assembly, homohexamer. Requires Mg(2+) as cofactor.

It carries out the reaction [HPr protein]-L-serine + ATP = [HPr protein]-O-phospho-L-serine + ADP + H(+). The enzyme catalyses [HPr protein]-O-phospho-L-serine + phosphate + H(+) = [HPr protein]-L-serine + diphosphate. In terms of biological role, catalyzes the ATP- as well as the pyrophosphate-dependent phosphorylation of a specific serine residue in HPr, a phosphocarrier protein of the phosphoenolpyruvate-dependent sugar phosphotransferase system (PTS). HprK/P also catalyzes the pyrophosphate-producing, inorganic phosphate-dependent dephosphorylation (phosphorolysis) of seryl-phosphorylated HPr (P-Ser-HPr). The chain is HPr kinase/phosphorylase from Nitrosomonas europaea (strain ATCC 19718 / CIP 103999 / KCTC 2705 / NBRC 14298).